A 295-amino-acid polypeptide reads, in one-letter code: Acetylglutamate kinase (295 aa).

Residues 66–67 (GG), R88, and N193 each bind substrate.

The protein belongs to the acetylglutamate kinase family. ArgB subfamily.

The protein localises to the cytoplasm. It carries out the reaction N-acetyl-L-glutamate + ATP = N-acetyl-L-glutamyl 5-phosphate + ADP. Its pathway is amino-acid biosynthesis; L-arginine biosynthesis; N(2)-acetyl-L-ornithine from L-glutamate: step 2/4. Functionally, catalyzes the ATP-dependent phosphorylation of N-acetyl-L-glutamate. The protein is Acetylglutamate kinase of Rhizobium etli (strain ATCC 51251 / DSM 11541 / JCM 21823 / NBRC 15573 / CFN 42).